The following is a 494-amino-acid chain: 4-trimethylaminobutyraldehyde dehydrogenase (494 aa).

Ser-2 carries the N-acetylserine modification. Lys-30 carries the post-translational modification N6-acetyllysine; alternate. Residue Lys-30 is modified to N6-succinyllysine; alternate. Lys-59 bears the N6-succinyllysine mark. NAD(+)-binding positions include Lys-180 and 232-236 (GSVPT). The Proton acceptor role is filled by Glu-254. The active-site Nucleophile is Cys-288. Lys-298 bears the N6-acetyllysine mark. Residue Lys-303 is modified to N6-acetyllysine; alternate. Lys-303 carries the post-translational modification N6-succinyllysine; alternate. Lys-344 carries the N6-acetyllysine modification. Glu-391 serves as a coordination point for NAD(+).

This sequence belongs to the aldehyde dehydrogenase family. In terms of assembly, homotetramer.

The protein localises to the cytoplasm. The protein resides in the cytosol. It catalyses the reaction 4-(trimethylamino)butanal + NAD(+) + H2O = 4-(trimethylamino)butanoate + NADH + 2 H(+). It carries out the reaction an aldehyde + NAD(+) + H2O = a carboxylate + NADH + 2 H(+). The catalysed reaction is 4-aminobutanal + NAD(+) + H2O = 4-aminobutanoate + NADH + 2 H(+). The enzyme catalyses formaldehyde + NAD(+) + H2O = formate + NADH + 2 H(+). It catalyses the reaction acetaldehyde + NAD(+) + H2O = acetate + NADH + 2 H(+). It carries out the reaction imidazole-4-acetaldehyde + NAD(+) + H2O = imidazole-4-acetate + NADH + 2 H(+). The catalysed reaction is acrolein + NAD(+) + H2O = acrylate + NADH + 2 H(+). The enzyme catalyses (5-hydroxyindol-3-yl)acetaldehyde + NAD(+) + H2O = (5-hydroxyindol-3-yl)acetate + NADH + 2 H(+). It catalyses the reaction 3,4-dihydroxyphenylacetaldehyde + NAD(+) + H2O = 3,4-dihydroxyphenylacetate + NADH + 2 H(+). It carries out the reaction spermine monoaldehyde + NAD(+) + H2O = N-(2-carboxyethyl)spermidine + NADH + 2 H(+). The catalysed reaction is propanal + NAD(+) + H2O = propanoate + NADH + 2 H(+). The enzyme catalyses butanal + NAD(+) + H2O = butanoate + NADH + 2 H(+). It catalyses the reaction pentanal + NAD(+) + H2O = pentanoate + NADH + 2 H(+). It carries out the reaction hexanal + NAD(+) + H2O = hexanoate + NADH + 2 H(+). It participates in amine and polyamine biosynthesis; carnitine biosynthesis. Converts gamma-trimethylaminobutyraldehyde into gamma-butyrobetaine with high efficiency (in vitro). Can catalyze the irreversible oxidation of a broad range of aldehydes to the corresponding acids in an NAD-dependent reaction, but with low efficiency. Catalyzes the oxidation of aldehydes arising from biogenic amines and polyamines. In Mus musculus (Mouse), this protein is 4-trimethylaminobutyraldehyde dehydrogenase.